Consider the following 596-residue polypeptide: Germinal center kinase 3 (596 aa).

Residues 1–54 are compositionally biased toward low complexity; sequence MSSSNLAGNTNTTTTSSAASAAAAHSAANASTITSEYSTTQTTTGTFNTDTLSS. A disordered region spans residues 1-80; sequence MSSSNLAGNT…PPPPPQVSSP (80 aa). Phosphothreonine; by autocatalysis occurs at positions 13 and 32. Residues 67–77 are compositionally biased toward pro residues; the sequence is SQPPPPPPPQV. Residues 108 to 386 enclose the Protein kinase domain; the sequence is YKLDESIGVG…ASELLKYSFF (279 aa). ATP-binding positions include 114–122 and Lys137; that span reads IGVGATATV. At Ser190 the chain carries Phosphoserine; by autocatalysis. Residue Asp240 is the Proton acceptor of the active site. Residue Thr280 is modified to Phosphothreonine. Position 405 is a phosphoserine; by autocatalysis (Ser405). Residue Ser419 is modified to Phosphoserine. Residues 429–496 form a disordered region; it reads NWEFEYDSPQ…EGGGATTPCP (68 aa). A compositionally biased stretch (acidic residues) spans 432-450; that stretch reads FEYDSPQESDDDSDLEDEE. Positions 466-479 are enriched in gly residues; sequence GAAGAAGGATGGAA.

This sequence belongs to the protein kinase superfamily. STE Ser/Thr protein kinase family. STE20 subfamily. As to quaternary structure, interacts (via C-terminus) with clh-3; required for the phosphorylation-mediated inhibition of clh-3 function. Interacts (via C-terminus) with wnk-1; the interaction is direct. In terms of processing, phosphorylated at Thr-280 and Ser-419 probably by wnk-1; phosphorylation results in weak activation. Predominantly autophosphorylated at Thr-32 and Ser-190 and weakly autophosphorylated at Thr-13 and Ser-405 in vitro. Ubiquitously expressed with a higher expression in the excretory cell. Expressed in both male and female germ cells; up-regulated in maturing spermatocytes but absent in mature sperm.

It localises to the cytoplasm. The protein resides in the nucleus. It catalyses the reaction L-seryl-[protein] + ATP = O-phospho-L-seryl-[protein] + ADP + H(+). It carries out the reaction L-threonyl-[protein] + ATP = O-phospho-L-threonyl-[protein] + ADP + H(+). Plays a role in osmotic stress responses by regulating ion homeostasis and by controlling cell volume via the phosphorylation-mediated inhibition of the chloride channel clh-3. In addition, increases gpdh-1 translation upon osmotic stress, likely downstream of wnk-1. Involved in several developmental processes including the tubular formation of the excretory canals, the formation of the intestine and the progression through larval stages. In addition, required for germ line development by controlling meiosis and chromosomal segregation during spermatogenesis. By controlling clh-3 activity, may regulate the development of the excretory canals and fertility. The chain is Germinal center kinase 3 from Caenorhabditis elegans.